A 158-amino-acid chain; its full sequence is Urease subunit beta (158 aa).

Positions 113 to 158 (EDDWRRSSAAGDAPQELPQVEAAERGRKLDEATDVGTEDTPEEGQN) are disordered. The span at 134-143 (AAERGRKLDE) shows a compositional bias: basic and acidic residues. Residues 144-158 (ATDVGTEDTPEEGQN) show a composition bias toward acidic residues.

This sequence belongs to the urease beta subunit family. In terms of assembly, heterotrimer of UreA (gamma), UreB (beta) and UreC (alpha) subunits. Three heterotrimers associate to form the active enzyme.

The protein localises to the cytoplasm. The enzyme catalyses urea + 2 H2O + H(+) = hydrogencarbonate + 2 NH4(+). The protein operates within nitrogen metabolism; urea degradation; CO(2) and NH(3) from urea (urease route): step 1/1. The chain is Urease subunit beta from Corynebacterium glutamicum (strain R).